A 521-amino-acid chain; its full sequence is Glucose-1-phosphate adenylyltransferase small subunit, chloroplastic/amyloplastic (521 aa).

Positions 1–32 (MAASIGALKSSPSSNNCINERRNDSTRAVSSR) are disordered. The transit peptide at 1–72 (MAASIGALKS…RSPMIVSPKA (72 aa)) directs the protein to the chloroplast. Residue K268 coordinates substrate. Positions 444-454 (TDADRKLLAAK) are allosteric regulation.

The protein belongs to the bacterial/plant glucose-1-phosphate adenylyltransferase family. In terms of assembly, heterotetramer. In terms of tissue distribution, leaves and tubers.

The protein localises to the plastid. It is found in the chloroplast. It localises to the amyloplast. It catalyses the reaction alpha-D-glucose 1-phosphate + ATP + H(+) = ADP-alpha-D-glucose + diphosphate. The protein operates within glycan biosynthesis; starch biosynthesis. Its activity is regulated as follows. Activated by 3'phosphoglycerate, inhibited by orthophosphate. Allosteric regulation. Its function is as follows. This protein plays a role in synthesis of starch. It catalyzes the synthesis of the activated glycosyl donor, ADP-glucose from Glc-1-P and ATP. The polypeptide is Glucose-1-phosphate adenylyltransferase small subunit, chloroplastic/amyloplastic (Solanum tuberosum (Potato)).